A 312-amino-acid polypeptide reads, in one-letter code: DNA-directed RNA polymerase subunit alpha (312 aa).

The alpha N-terminal domain (alpha-NTD) stretch occupies residues 1–226 (MIEFEKPTIT…EHLGLFTDLT (226 aa)). Positions 242 to 312 (SDDRMLDRTI…DLGLGLKKDK (71 aa)) are alpha C-terminal domain (alpha-CTD).

The protein belongs to the RNA polymerase alpha chain family. In terms of assembly, homodimer. The RNAP catalytic core consists of 2 alpha, 1 beta, 1 beta' and 1 omega subunit. When a sigma factor is associated with the core the holoenzyme is formed, which can initiate transcription.

The catalysed reaction is RNA(n) + a ribonucleoside 5'-triphosphate = RNA(n+1) + diphosphate. DNA-dependent RNA polymerase catalyzes the transcription of DNA into RNA using the four ribonucleoside triphosphates as substrates. This chain is DNA-directed RNA polymerase subunit alpha, found in Streptococcus suis (strain 98HAH33).